Consider the following 338-residue polypeptide: MATQHPIGKKTACVVGGTGFVASLLVKLLLQKGYAVNTTVRDPDNQKKVSHLLELQELGDLKIFRADLTDELSFEAPIAGCDFVFHVATPVHFASEDPENDMIKPAVQGVVNVMKACTRAKSVKRVILTSSAAAVTINQLDGTGLVVDEKNWTDIEFLTSAKPPTWGYPASKTLAEKAAWKFAEENNIDLITVIPTLMAGSSLTSDVPSSIGLAMSLITGNEFLINGMKGMQMLSGSVSIAHVEDVCRAHIFVAEKESASGRYICCAANTSVPELAKFLSKRYPQYKVPTDFGDFPSKSKLIISSDKLVKEGFSFKYGIEEIYDESVEYFKAKGLLQN.

NADP(+) is bound by residues 18–21 (TGFV), lysine 48, 87–90 (VATP), and tyrosine 168.

This sequence belongs to the NAD(P)-dependent epimerase/dehydratase family. Dihydroflavonol-4-reductase subfamily.

It carries out the reaction a (2S,3R)-flavan-3-ol + 2 NADP(+) = an anthocyanidin with a 3-hydroxy group + 2 NADPH + 2 H(+). It catalyses the reaction a (2S,3S)-flavan-3-ol + 2 NADP(+) = an anthocyanidin with a 3-hydroxy group + 2 NADPH + 2 H(+). It functions in the pathway secondary metabolite biosynthesis; flavonoid biosynthesis. Produces the terminal flavan-3-ol monomers required for the formation of proanthocyanidins or condensed tannins in leaves and flowers, as well as in the skin and seeds of developing berries. Behaves as a reductase and as a C-3 epimerase. Catalyzes the double reduction of anthocyanidins, producing a mixture of (2S,3S)- and (2S,3R)-flavan-3-ols. The enzyme catalyzes sequential hydride transfers to C-2 and C-4, respectively and epimerization at C-3 is achieved by tautomerization that occurs between the two hydride transfers. Converts cyanidin, pelargonidin and delphinidin into catechin and epicatechin, afzelechin and epiafzelechin, and gallocatechin and epigallocatechin respectively. The polypeptide is Anthocyanidin reductase ((2S)-flavan-3-ol-forming) (Vitis vinifera (Grape)).